A 332-amino-acid polypeptide reads, in one-letter code: Geranylgeranyl diphosphate synthase (332 aa).

Residues Lys45, Arg48, and His77 each coordinate isopentenyl diphosphate. Residues Asp84 and Asp88 each coordinate Mg(2+). Arg93 lines the an all-trans-polyprenyl diphosphate pocket. Arg94 is an isopentenyl diphosphate binding site. The an all-trans-polyprenyl diphosphate site is built by Lys177, Thr178, Gln215, Lys232, and Lys242.

The protein belongs to the FPP/GGPP synthase family. The cofactor is Mg(2+).

It carries out the reaction isopentenyl diphosphate + (2E,6E)-farnesyl diphosphate = (2E,6E,10E)-geranylgeranyl diphosphate + diphosphate. The protein operates within isoprenoid biosynthesis; geranylgeranyl diphosphate biosynthesis; geranylgeranyl diphosphate from farnesyl diphosphate and isopentenyl diphosphate: step 1/1. In terms of biological role, catalyzes the condensation of isopentenyl pyrophosphate with the allylic pyrophosphates to yield geranylgeranyl diphosphate (GGPP) which is a precursor of the ether-linked lipids. In Saccharolobus solfataricus (strain ATCC 35092 / DSM 1617 / JCM 11322 / P2) (Sulfolobus solfataricus), this protein is Geranylgeranyl diphosphate synthase (gds).